The chain runs to 588 residues: ustiloxin B cluster transcription factor ustR (588 aa).

A DNA-binding region (zn(2)-C6 fungal-type) is located at residues 11 to 38 (CWTCRLRRKKCNEDGQPCSNCEARGVFC). The disordered stretch occupies residues 68–92 (RTRRARATPTNSINGEPRRPSIDMN).

Its subcellular location is the nucleus. Functionally, transcription factor that regulates the expression of the gene cluster that mediates the biosynthesis of ustiloxin B, an antimitotic tetrapeptide. This Aspergillus flavus (strain ATCC 200026 / FGSC A1120 / IAM 13836 / NRRL 3357 / JCM 12722 / SRRC 167) protein is ustiloxin B cluster transcription factor ustR.